The primary structure comprises 189 residues: Ribonuclease HII (189 aa).

An RNase H type-2 domain is found at 1–189 (MIAGVDEAGR…IAALLKNNKK (189 aa)). A divalent metal cation is bound by residues D6, E7, and D98.

The protein belongs to the RNase HII family. It depends on Mn(2+) as a cofactor. Mg(2+) is required as a cofactor.

The protein localises to the cytoplasm. It catalyses the reaction Endonucleolytic cleavage to 5'-phosphomonoester.. Its function is as follows. Endonuclease that specifically degrades the RNA of RNA-DNA hybrids. The sequence is that of Ribonuclease HII from Dichelobacter nodosus (strain VCS1703A).